The primary structure comprises 463 residues: Probable ECA polymerase (463 aa).

11 helical membrane-spanning segments follow: residues 6–26 (FGGLFVVYLISVIFILSLTWM), 39–59 (FSLLYLLTFYFGFPFTCVLVF), 65–85 (VVPVQYLLQAMLSATAFYAVY), 112–132 (ANLTWLLLALIAVATVGIFFL), 154–174 (GVALKRFFYFFIPAMLVVYFL), 180–200 (AWLLFLIGTVAFGMLTYVIVG), 201–221 (GTRANLIIAFALFLFIGIVRG), 222–242 (WITLWMLVAAGIFGIVGMFWL), 340–360 (LVVMGGVLFIPLGAIAVGLVI), 377–397 (YKAAILQAFCFGAVFNIIVLT), and 408–428 (VVFFCLIFGLCLLVAKLLYWL).

It belongs to the WzyE family. In terms of assembly, probably part of a complex composed of WzxE, WzyE and WzzE.

It is found in the cell inner membrane. The protein operates within bacterial outer membrane biogenesis; enterobacterial common antigen biosynthesis. In terms of biological role, probably involved in the polymerization of enterobacterial common antigen (ECA) trisaccharide repeat units. The protein is Probable ECA polymerase of Pectobacterium atrosepticum (strain SCRI 1043 / ATCC BAA-672) (Erwinia carotovora subsp. atroseptica).